A 119-amino-acid polypeptide reads, in one-letter code: U-scoloptoxin(16)-Er11a (119 aa).

The N-terminal stretch at 1–19 is a signal peptide; the sequence is MKSWTAAVLSLGLIYLSIS.

The protein belongs to the scoloptoxin-16 family. Post-translationally, contains 4 disulfide bonds. As to expression, expressed by the venom gland.

The protein localises to the secreted. This is U-scoloptoxin(16)-Er11a from Ethmostigmus rubripes (Giant centipede).